A 297-amino-acid polypeptide reads, in one-letter code: tRNA pseudouridine synthase B (297 aa).

Asp-44 functions as the Nucleophile in the catalytic mechanism.

Belongs to the pseudouridine synthase TruB family. Type 1 subfamily.

It carries out the reaction uridine(55) in tRNA = pseudouridine(55) in tRNA. In terms of biological role, responsible for synthesis of pseudouridine from uracil-55 in the psi GC loop of transfer RNAs. The sequence is that of tRNA pseudouridine synthase B from Corynebacterium efficiens (strain DSM 44549 / YS-314 / AJ 12310 / JCM 11189 / NBRC 100395).